Consider the following 428-residue polypeptide: Adenylosuccinate synthetase (428 aa).

GTP contacts are provided by residues Gly12–Lys18 and Gly40–Thr42. Asp13 acts as the Proton acceptor in catalysis. 2 residues coordinate Mg(2+): Asp13 and Gly40. IMP-binding positions include Asp13–Lys16, Asn38–His41, Thr128, Arg142, Gln222, Thr237, and Arg301. Residue His41 is the Proton donor of the active site. Residue Val297 to Arg303 participates in substrate binding. Residues Arg303, Lys329–Asp331, and Ser411–Ser413 contribute to the GTP site.

This sequence belongs to the adenylosuccinate synthetase family. In terms of assembly, homodimer. Mg(2+) serves as cofactor.

It is found in the cytoplasm. The enzyme catalyses IMP + L-aspartate + GTP = N(6)-(1,2-dicarboxyethyl)-AMP + GDP + phosphate + 2 H(+). It participates in purine metabolism; AMP biosynthesis via de novo pathway; AMP from IMP: step 1/2. Its function is as follows. Plays an important role in the de novo pathway of purine nucleotide biosynthesis. Catalyzes the first committed step in the biosynthesis of AMP from IMP. The polypeptide is Adenylosuccinate synthetase (Caulobacter vibrioides (strain ATCC 19089 / CIP 103742 / CB 15) (Caulobacter crescentus)).